The following is a 528-amino-acid chain: J domain-containing protein APJ1 (528 aa).

The J domain maps to 4 to 73; sequence NTSLYDSLNV…RALYDQYGTT (70 aa). The CR-type zinc-finger motif lies at 193–274; that stretch reads GKTAKLGLNR…CQGLGFIKER (82 aa). CXXCXGXG motif repeat units follow at residues 206–213, 218–225, 246–253, and 262–269; these read CSVCDGHG, CTCKTCKG, CADCGGAG, and CQQCQGLG. The span at 485-499 shows a compositional bias: basic and acidic residues; the sequence is NERDSRKRNNRRFDE. Residues 485–528 form a disordered region; sequence NERDSRKRNNRRFDESNINNNNETKRNKYSSPVSGFYDHDINGY.

It is found in the cytoplasm. Its subcellular location is the nucleus. In terms of biological role, putative chaperone involved in protein folding. Interferes with propagation of [PSI+] prion when overproduced. The polypeptide is J domain-containing protein APJ1 (APJ1) (Saccharomyces cerevisiae (strain ATCC 204508 / S288c) (Baker's yeast)).